The primary structure comprises 382 residues: 3-dehydroquinate synthase (382 aa).

Residues 81–86 (EGEGSK), 115–119 (GVVGD), 139–140 (TS), Lys-152, and Lys-161 each bind NAD(+). 3 residues coordinate Zn(2+): Glu-194, His-256, and His-274.

It belongs to the sugar phosphate cyclases superfamily. Dehydroquinate synthase family. It depends on Co(2+) as a cofactor. The cofactor is Zn(2+). NAD(+) serves as cofactor.

It localises to the cytoplasm. It catalyses the reaction 7-phospho-2-dehydro-3-deoxy-D-arabino-heptonate = 3-dehydroquinate + phosphate. It participates in metabolic intermediate biosynthesis; chorismate biosynthesis; chorismate from D-erythrose 4-phosphate and phosphoenolpyruvate: step 2/7. Catalyzes the conversion of 3-deoxy-D-arabino-heptulosonate 7-phosphate (DAHP) to dehydroquinate (DHQ). The polypeptide is 3-dehydroquinate synthase (Bradyrhizobium sp. (strain BTAi1 / ATCC BAA-1182)).